The sequence spans 1363 residues: Vascular endothelial growth factor receptor 3 (1363 aa).

The signal sequence occupies residues 1–24 (MQRGAALCLRLWLCLGLLDGLVSG). The Extracellular portion of the chain corresponds to 25 to 775 (YSMTPPTLNI…EGSEDKGSME (751 aa)). 7 Ig-like C2-type domains span residues 30-127 (PTLN…TAAS), 151-213 (KDAM…WGDQ), 219-326 (PFLV…TEVI), 331-415 (PFIS…ISLE), 422-552 (PQIH…FYVT), 555-671 (PDGF…KYLS), and 678-764 (PRLT…ASVA). N-linked (GlcNAc...) asparagine glycans are attached at residues N33, N104, N166, N251, N299, and N411. Cystine bridges form between C51–C111 and C158–C206. A disulfide bridge connects residues C252 and C310. Disulfide bonds link C445/C534, C466/C486, and C578/C653. N515, N527, N594, N683, and N690 each carry an N-linked (GlcNAc...) asparagine glycan. A disulfide bond links C699 and C751. An N-linked (GlcNAc...) asparagine glycan is attached at N758. A helical membrane pass occupies residues 776-796 (IVILVGTGVIAVFFWVLLLLI). Topologically, residues 797-1363 (FCNMRRPAHA…RVTFFTDNSY (567 aa)) are cytoplasmic. A phosphotyrosine; by SRC mark is found at Y830, Y833, and Y853. The Protein kinase domain occupies 845–1173 (LHLGRVLGYG…ELVEILGDLL (329 aa)). Residues 851 to 859 (LGYGAFGKV) and K879 each bind ATP. D1037 serves as the catalytic Proton acceptor. Residue Y1063 is modified to Phosphotyrosine; by autocatalysis and SRC. Phosphotyrosine; by autocatalysis occurs at positions 1068, 1230, 1231, and 1265. The tract at residues 1291–1331 (HRQESGFSCKGPGQNVAVTRAHPDSQGRRRRPERGARGGQV) is disordered. Y1333 and Y1337 each carry phosphotyrosine; by autocatalysis and SRC. Y1363 is subject to Phosphotyrosine; by autocatalysis.

Belongs to the protein kinase superfamily. Tyr protein kinase family. CSF-1/PDGF receptor subfamily. Interacts with VEGFC and VEGFD. Monomer in the absence of bound VEGFC or VEGFD. Homodimer in the presence of bound VEGFC or VEGFD. Can also form a heterodimer with KDR. Interacts with PTPN14; the interaction is enhanced by stimulation with VEGFC. Interacts with CRK, GRB2, PTK2/FAK1, SHC1, PIK3R1 and PTPN11/SHP-2. Identified in a complex with SRC and ITGB1. In terms of processing, autophosphorylated on tyrosine residues upon ligand binding. Autophosphorylation occurs in trans, i.e. one subunit of the dimeric receptor phosphorylates tyrosine residues on the other subunit. Phosphorylation in response to H(2)O(2) is mediated by a process that requires SRC and PRKCD activity. Phosphorylation at Tyr-1068 is required for autophosphorylation at additional tyrosine residues. Phosphorylation at Tyr-1063 and Tyr-1337 is important for interaction with CRK and subsequent activation of MAPK8. Phosphorylation at Tyr-1230, Tyr-1231 and Tyr-1337 is important for interaction with GRB2 and subsequent activation of the AKT1 and MAPK1/ERK2 and/or MAPK3/ERK1 signaling pathways. In response to endothelial cell adhesion onto collagen, can also be phosphorylated in the absence of FLT4 kinase activity by SRC at Tyr-830, Tyr-833, Tyr-853, Tyr-1063, Tyr-1333, and Tyr-1337. As to expression, detected in endothelial cells (at protein level). Widely expressed. Detected in fetal spleen, lung and brain. Detected in adult liver, muscle, thymus, placenta, lung, testis, ovary, prostate, heart, and kidney.

It localises to the cell membrane. Its subcellular location is the cytoplasm. The protein localises to the nucleus. The protein resides in the secreted. The enzyme catalyses L-tyrosyl-[protein] + ATP = O-phospho-L-tyrosyl-[protein] + ADP + H(+). With respect to regulation, present in an inactive conformation in the absence of bound ligand. Binding of VEGFC or VEGFD leads to dimerization and activation by autophosphorylation on tyrosine residues. Inhibited by MAZ51. Functionally, tyrosine-protein kinase that acts as a cell-surface receptor for VEGFC and VEGFD, and plays an essential role in adult lymphangiogenesis and in the development of the vascular network and the cardiovascular system during embryonic development. Promotes proliferation, survival and migration of endothelial cells, and regulates angiogenic sprouting. Signaling by activated FLT4 leads to enhanced production of VEGFC, and to a lesser degree VEGFA, thereby creating a positive feedback loop that enhances FLT4 signaling. Modulates KDR signaling by forming heterodimers. The secreted isoform 3 may function as a decoy receptor for VEGFC and/or VEGFD and play an important role as a negative regulator of VEGFC-mediated lymphangiogenesis and angiogenesis. Binding of vascular growth factors to isoform 1 or isoform 2 leads to the activation of several signaling cascades; isoform 2 seems to be less efficient in signal transduction, because it has a truncated C-terminus and therefore lacks several phosphorylation sites. Mediates activation of the MAPK1/ERK2, MAPK3/ERK1 signaling pathway, of MAPK8 and the JUN signaling pathway, and of the AKT1 signaling pathway. Phosphorylates SHC1. Mediates phosphorylation of PIK3R1, the regulatory subunit of phosphatidylinositol 3-kinase. Promotes phosphorylation of MAPK8 at 'Thr-183' and 'Tyr-185', and of AKT1 at 'Ser-473'. The protein is Vascular endothelial growth factor receptor 3 (FLT4) of Homo sapiens (Human).